Reading from the N-terminus, the 856-residue chain is V-type proton ATPase 116 kDa subunit a 2 (856 aa).

Residues 1–393 (MGSLFRSETM…DAYGVGSYRE (393 aa)) lie on the Cytoplasmic side of the membrane. A helical transmembrane segment spans residues 394-412 (VNPALFTIITFPFLFAVMF). Residues 413 to 414 (GD) are Vacuolar-facing. The helical transmembrane segment at 415–431 (FGHGFVMFLFALLLVLN) threads the bilayer. The Cytoplasmic portion of the chain corresponds to 432–445 (ENHPRLNQSQEIMR). Residues 446-475 (MFFNGRYILLLMGLFSVYTGLIYNDCFSKS) form a helical membrane-spanning segment. Residues 476 to 549 (VNLFGSGWNV…ATNRLTFLNS (74 aa)) lie on the Vacuolar side of the membrane. 2 N-linked (GlcNAc...) asparagine glycosylation sites follow: Asn-484 and Asn-505. A helical transmembrane segment spans residues 550–569 (FKMKMSVILGIIHMTFGVIL). The Cytoplasmic segment spans residues 570–587 (GIFNHLHFRKKFNIYLVS). The helical transmembrane segment at 588-608 (IPELLFMLCIFGYLIFMIFYK) threads the bilayer. The Vacuolar portion of the chain corresponds to 609-651 (WLVFSAETSRVAPSILIEFINMFLFPASKTSGLYTGQEYVQRV). A helical membrane pass occupies residues 652 to 671 (LLVVTALSVPVLFLGKPLFL). The Cytoplasmic portion of the chain corresponds to 672-739 (LWLHNGRSCF…EILMTQVIHS (68 aa)). Ser-695 and Ser-700 each carry phosphoserine. Residues 740–764 (IEYCLGCISNTASYLRLWALSLAHA) traverse the membrane as a helical segment. Residues 765 to 785 (QLSDVLWAMLMRVGLRVDTTY) are Vacuolar-facing. Residues 786-824 (GVLLLLPVIALFAVLTIFILLIMEGLSAFLHAIRLHWVE) traverse the membrane as a helical segment. Topologically, residues 825-856 (FQNKFYVGAGTKFVPFSFSLLSSKFNNDDSVA) are cytoplasmic.

The protein belongs to the V-ATPase 116 kDa subunit family. V-ATPase is a heteromultimeric enzyme made up of two complexes: the ATP-hydrolytic V1 complex and the proton translocation V0 complex. The V1 complex consists of three catalytic AB heterodimers that form a heterohexamer, three peripheral stalks each consisting of EG heterodimers, one central rotor including subunits D and F, and the regulatory subunits C and H. The proton translocation complex V0 consists of the proton transport subunit a, a ring of proteolipid subunits c9c'', rotary subunit d, subunits e and f, and the accessory subunits ATP6AP1/Ac45 and ATP6AP2/PRR. Directly interacts with PSCD2 through its N-terminal cytosolic tail in an intra-endosomal acidification-dependent manner. Disruption of this interaction results in the inhibition of endocytosis. Interacts with SPAAR.

It is found in the cell membrane. The protein resides in the endosome membrane. Its function is as follows. Subunit of the V0 complex of vacuolar(H+)-ATPase (V-ATPase), a multisubunit enzyme composed of a peripheral complex (V1) that hydrolyzes ATP and a membrane integral complex (V0) that translocates protons. V-ATPase is responsible for acidifying and maintaining the pH of intracellular compartments and in some cell types, is targeted to the plasma membrane, where it is responsible for acidifying the extracellular environment. Essential component of the endosomal pH-sensing machinery. May play a role in maintaining the Golgi functions, such as glycosylation maturation, by controlling the Golgi pH. In aerobic conditions, involved in intracellular iron homeostasis, thus triggering the activity of Fe(2+) prolyl hydroxylase (PHD) enzymes, and leading to HIF1A hydroxylation and subsequent proteasomal degradation. This is V-type proton ATPase 116 kDa subunit a 2 (ATP6V0A2) from Homo sapiens (Human).